The sequence spans 256 residues: CCAAT/enhancer-binding protein delta (256 aa).

Ser-2 is subject to N-acetylserine. Disordered regions lie at residues 18–40 (TAEP…AEPA), 92–121 (GGPA…APGS), and 139–206 (AAAQ…NQEM). Lys-108 participates in a covalent cross-link: Glycyl lysine isopeptide (Lys-Gly) (interchain with G-Cter in SUMO). The span at 143 to 162 (PTPPASPEPPRRSPAPPAPG) shows a compositional bias: pro residues. The span at 164–188 (ARDKAAGKRGPDRGSPEYRQRRERN) shows a compositional bias: basic and acidic residues. Residues 178–241 (SPEYRQRRER…AGLRRFFKQL (64 aa)) form the bZIP domain. The tract at residues 182 to 209 (RQRRERNNIAVRKSRDKAKRRNQEMQQK) is basic motif. A leucine-zipper region spans residues 213–241 (LSAENEKLQQRVEQLTRDLAGLRRFFKQL).

The protein belongs to the bZIP family. C/EBP subfamily. In terms of assembly, binds DNA as a homodimer and as a heterodimer. Can form stable heterodimers with CEBPB. Can form stable heterodimers with CEBPA and CEBPE. Directly interacts with SPI1/PU.1; this interaction does not affect DNA-binding properties of each partner. Interacts with PRDM16.

It is found in the nucleus. Functionally, transcription activator that recognizes two different DNA motifs: the CCAAT homology common to many promoters and the enhanced core homology common to many enhancers. Important transcription factor regulating the expression of genes involved in immune and inflammatory responses. Transcriptional activator that enhances IL6 transcription alone and as heterodimer with CEBPB. This chain is CCAAT/enhancer-binding protein delta (CEBPD), found in Bos taurus (Bovine).